A 122-amino-acid chain; its full sequence is Large ribosomal subunit protein uL14c (122 aa).

Belongs to the universal ribosomal protein uL14 family. In terms of assembly, part of the 50S ribosomal subunit.

It localises to the plastid. The protein resides in the chloroplast. In terms of biological role, binds to 23S rRNA. This chain is Large ribosomal subunit protein uL14c, found in Staurastrum punctulatum (Green alga).